The following is a 270-amino-acid chain: Chlorophyll a-b binding protein, chloroplastic (270 aa).

A chloroplast-targeting transit peptide spans 1–41 (MASACASSTIAAVAFSSPSSQKNGSIVGATKASFLGGKRLR). W68 serves as a coordination point for chlorophyll b. Chlorophyll a-binding residues include F88, E107, and H110. R112 is a chlorophyll b binding site. A helical membrane pass occupies residues 113 to 133 (WAMLGAAGIFIPEFLTKIGVL). Q144 is a chlorophyll a binding site. A helical membrane pass occupies residues 146–166 (YFTDTTTLFVIELVLIGWAEG). Chlorophyll b-binding residues include V155, E165, and R168. Residues K221, E222, N225, R227, Q239, and H254 each coordinate chlorophyll a. The helical transmembrane segment at 228-248 (LAMLAVMGAWFQHIYTGTGPI) threads the bilayer.

Belongs to the light-harvesting chlorophyll a/b-binding (LHC) protein family. The LHC complex consists of chlorophyll a-b binding proteins. It depends on Binds at least 14 chlorophylls (8 Chl-a and 6 Chl-b) and carotenoids such as lutein and neoxanthin. as a cofactor. In terms of processing, photoregulated by reversible phosphorylation of its threonine residues.

It localises to the plastid. It is found in the chloroplast thylakoid membrane. In terms of biological role, the light-harvesting complex (LHC) functions as a light receptor, it captures and delivers excitation energy to photosystems with which it is closely associated. This chain is Chlorophyll a-b binding protein, chloroplastic, found in Petunia hybrida (Petunia).